The chain runs to 358 residues: 3-dehydroquinate synthase (358 aa).

NAD(+) is bound by residues 105 to 109 (GVVGD), 129 to 130 (TT), Lys142, Lys151, and 169 to 172 (TLKT). Positions 184, 245, and 262 each coordinate Zn(2+).

It belongs to the sugar phosphate cyclases superfamily. Dehydroquinate synthase family. The cofactor is NAD(+). It depends on Co(2+) as a cofactor. Zn(2+) is required as a cofactor.

It localises to the cytoplasm. It catalyses the reaction 7-phospho-2-dehydro-3-deoxy-D-arabino-heptonate = 3-dehydroquinate + phosphate. It functions in the pathway metabolic intermediate biosynthesis; chorismate biosynthesis; chorismate from D-erythrose 4-phosphate and phosphoenolpyruvate: step 2/7. Functionally, catalyzes the conversion of 3-deoxy-D-arabino-heptulosonate 7-phosphate (DAHP) to dehydroquinate (DHQ). The protein is 3-dehydroquinate synthase of Enterococcus faecalis (strain ATCC 700802 / V583).